Here is a 354-residue protein sequence, read N- to C-terminus: tRNase Z TRZ2, chloroplastic (354 aa).

The segment at 1–21 (MQLSSSFPISPPKIFPSTKHH) is disordered. A chloroplast-targeting transit peptide spans 1–68 (MQLSSSFPIS…EEEEEYRKAR (68 aa)).

Belongs to the RNase Z family. In terms of assembly, homodimer. The cofactor is Zn(2+). Ca(2+) is required as a cofactor. Requires Mn(2+) as cofactor. Mg(2+) serves as cofactor. As to expression, highly expressed in green and actively dividing tissues.

It localises to the plastid. Its subcellular location is the chloroplast. The catalysed reaction is Endonucleolytic cleavage of RNA, removing extra 3' nucleotides from tRNA precursor, generating 3' termini of tRNAs. A 3'-hydroxy group is left at the tRNA terminus and a 5'-phosphoryl group is left at the trailer molecule.. In terms of biological role, zinc phosphodiesterase, which displays tRNA 3'-processing endonuclease activity. Involved in tRNA maturation, by removing a 3'-trailer from precursor tRNA. This chain is tRNase Z TRZ2, chloroplastic, found in Arabidopsis thaliana (Mouse-ear cress).